Here is a 443-residue protein sequence, read N- to C-terminus: 2-hydroxyethylphosphonate dioxygenase (443 aa).

Positions 8–63 (LAHWMNARKYTAAQTADLAGLPLDDLRRLLGDEANEPDPAAATALAEALSVEPSQL) constitute an HTH cro/C1-type 1 domain. Residue Lys-16 coordinates substrate. The segment at residues 19-38 (AAQTADLAGLPLDDLRRLLG) is a DNA-binding region (H-T-H motif). The substrate site is built by Tyr-98 and Asn-126. His-129 provides a ligand contact to Fe cation. Substrate-binding residues include Glu-176, His-182, and Ser-196. His-182 provides a ligand contact to Fe cation. Residues 234-290 (VLDLFLARRAHTRTSAAEAAGVPPADLEAALRSPASETGLTVLRTLGRALGFDYRVL) enclose the HTH cro/C1-type 2 domain. A DNA-binding region (H-T-H motif) is located at residues 245–265 (TRTSAAEAAGVPPADLEAALR).

Belongs to the non-heme iron-dependent dioxygenase family. In terms of assembly, homodimer. The cofactor is Fe(2+).

It carries out the reaction 2-hydroxyethylphosphonate + O2 = hydroxymethylphosphonate + formate + H(+). The protein operates within secondary metabolite biosynthesis; bialaphos biosynthesis. Functionally, non-heme-dependent dioxygenase that catalyzes the conversion of 2-hydroxyethylphosphonate (HEP) to hydroxymethylphosphonate (HMP) in the biosynthesis of phosphinothricin tripeptide (PTT), also known as bialaphos (BA), a natural-product antibiotic and potent herbicide. PTT contains the unusual amino acid phosphinothricin attached to 2 alanine residues. Synthetic phosphinothricin (glufosinate) is a key component of commercial herbicides. In Streptomyces viridochromogenes (strain DSM 40736 / JCM 4977 / BCRC 1201 / Tue 494), this protein is 2-hydroxyethylphosphonate dioxygenase (hepD).